Consider the following 129-residue polypeptide: MARPRRSGKKKEKKNVPVGIAHVKATFNNTIITFTDLKGNVISWATSGASGFKGSRKSTPFAAQVAAETAARKAQDQGMRTVGIFVKGPGSGREAAMRAIGNVGMKVNFIRDITPIPHNGCRPPKRRRV.

It belongs to the universal ribosomal protein uS11 family. In terms of assembly, part of the 30S ribosomal subunit. Interacts with proteins S7 and S18. Binds to IF-3.

Located on the platform of the 30S subunit, it bridges several disparate RNA helices of the 16S rRNA. Forms part of the Shine-Dalgarno cleft in the 70S ribosome. The sequence is that of Small ribosomal subunit protein uS11 from Maridesulfovibrio salexigens (strain ATCC 14822 / DSM 2638 / NCIMB 8403 / VKM B-1763) (Desulfovibrio salexigens).